Reading from the N-terminus, the 199-residue chain is Glycerol-3-phosphate acyltransferase (199 aa).

5 helical membrane passes run 3–23, 50–70, 78–98, 113–133, and 154–174; these read AAVW…GVLV, WGPA…AVLV, DWML…SVFL, LLFL…SVIL, and LALG…LLIF.

The protein belongs to the PlsY family. In terms of assembly, probably interacts with PlsX.

The protein localises to the cell inner membrane. The enzyme catalyses an acyl phosphate + sn-glycerol 3-phosphate = a 1-acyl-sn-glycero-3-phosphate + phosphate. The protein operates within lipid metabolism; phospholipid metabolism. Catalyzes the transfer of an acyl group from acyl-phosphate (acyl-PO(4)) to glycerol-3-phosphate (G3P) to form lysophosphatidic acid (LPA). This enzyme utilizes acyl-phosphate as fatty acyl donor, but not acyl-CoA or acyl-ACP. This chain is Glycerol-3-phosphate acyltransferase, found in Thermus thermophilus (strain ATCC BAA-163 / DSM 7039 / HB27).